The sequence spans 1053 residues: Carbamoyl phosphate synthase large chain (1053 aa).

The carboxyphosphate synthetic domain stretch occupies residues 1 to 397; that stretch reads MPKRTDIKKV…SFMKAKRSID (397 aa). Arg-127, Arg-167, Gly-173, Gly-174, Glu-206, Val-208, Glu-213, Gly-239, Ile-240, His-241, Gln-282, and Glu-294 together coordinate ATP. The 193-residue stretch at 131-323 folds into the ATP-grasp 1 domain; sequence RDLMNEIGEP…IARVAAKIAI (193 aa). Residues Gln-282, Glu-294, and Asn-296 each contribute to the Mg(2+) site. Mn(2+) is bound by residues Gln-282, Glu-294, and Asn-296. The tract at residues 398–530 is oligomerization domain; the sequence is TDVRTHTSPS…YSTREGTSEI (133 aa). A carbamoyl phosphate synthetic domain region spans residues 531-919; sequence VRDKKQKILI…YKACISADNE (389 aa). Residues 661–852 form the ATP-grasp 2 domain; sequence SVLLTTLQIP…IAKIAAKVMI (192 aa). Residues Arg-697, Ser-736, Leu-738, Glu-743, Gly-768, Ile-769, His-770, Ser-771, Gln-811, and Glu-823 each contribute to the ATP site. Gln-811, Glu-823, and Asn-825 together coordinate Mg(2+). Positions 811, 823, and 825 each coordinate Mn(2+). Residues 918 to 1053 enclose the MGS-like domain; it reads NELPLKGNVF…TLEPLSHYLR (136 aa). The tract at residues 920–1053 is allosteric domain; sequence LPLKGNVFVS…TLEPLSHYLR (134 aa).

Belongs to the CarB family. Composed of two chains; the small (or glutamine) chain promotes the hydrolysis of glutamine to ammonia, which is used by the large (or ammonia) chain to synthesize carbamoyl phosphate. Tetramer of heterodimers (alpha,beta)4. The cofactor is Mg(2+). Mn(2+) is required as a cofactor.

The catalysed reaction is hydrogencarbonate + L-glutamine + 2 ATP + H2O = carbamoyl phosphate + L-glutamate + 2 ADP + phosphate + 2 H(+). It catalyses the reaction hydrogencarbonate + NH4(+) + 2 ATP = carbamoyl phosphate + 2 ADP + phosphate + 2 H(+). The protein operates within amino-acid biosynthesis; L-arginine biosynthesis; carbamoyl phosphate from bicarbonate: step 1/1. It functions in the pathway pyrimidine metabolism; UMP biosynthesis via de novo pathway; (S)-dihydroorotate from bicarbonate: step 1/3. Functionally, large subunit of the glutamine-dependent carbamoyl phosphate synthetase (CPSase). CPSase catalyzes the formation of carbamoyl phosphate from the ammonia moiety of glutamine, carbonate, and phosphate donated by ATP, constituting the first step of 2 biosynthetic pathways, one leading to arginine and/or urea and the other to pyrimidine nucleotides. The large subunit (synthetase) binds the substrates ammonia (free or transferred from glutamine from the small subunit), hydrogencarbonate and ATP and carries out an ATP-coupled ligase reaction, activating hydrogencarbonate by forming carboxy phosphate which reacts with ammonia to form carbamoyl phosphate. The polypeptide is Carbamoyl phosphate synthase large chain (Methanoregula boonei (strain DSM 21154 / JCM 14090 / 6A8)).